Reading from the N-terminus, the 374-residue chain is Probable tuliposide A-converting enzyme b6, amyloplastic (374 aa).

The transit peptide at 1-68 (MSVALFCGPP…TNSSLSPSPT (68 aa)) directs the protein to the amyloplast. The active-site Acyl-ester intermediate is Ser-226. Catalysis depends on charge relay system residues Asp-316 and His-348.

The protein belongs to the AB hydrolase superfamily. In terms of assembly, homodimer.

It is found in the plastid. Its subcellular location is the amyloplast. It catalyses the reaction 6-tuliposide A = tulipalin A + D-glucose. Its function is as follows. Lactone-forming carboxylesterases, specifically catalyzing intramolecular transesterification, but not hydrolysis. Involved in the biosynthesis of tulipalins, defensive chemicals that show antimicrobial activities against a broad range of strains of bacteria and fungi. Substrates are 6-tuliposide A &gt; 6-tuliposide B. The polypeptide is Probable tuliposide A-converting enzyme b6, amyloplastic (TCEA-B6) (Tulipa gesneriana (Garden tulip)).